The sequence spans 338 residues: uncharacterized protein (338 aa).

Residues 1–29 (MIKQLYKNITICSLTISTALTVFPATSYA) form the signal peptide.

The protein belongs to the aerolysin family.

This is an uncharacterized protein from Staphylococcus aureus (strain bovine RF122 / ET3-1).